Reading from the N-terminus, the 339-residue chain is Undecaprenyl-phosphate 4-deoxy-4-formamido-L-arabinose transferase (339 aa).

The next 2 membrane-spanning stretches (helical) occupy residues Leu235–Val255 and Phe270–Leu290.

It belongs to the glycosyltransferase 2 family.

The protein localises to the cell inner membrane. It carries out the reaction UDP-4-deoxy-4-formamido-beta-L-arabinose + di-trans,octa-cis-undecaprenyl phosphate = 4-deoxy-4-formamido-alpha-L-arabinopyranosyl di-trans,octa-cis-undecaprenyl phosphate + UDP. It functions in the pathway glycolipid biosynthesis; 4-amino-4-deoxy-alpha-L-arabinose undecaprenyl phosphate biosynthesis; 4-amino-4-deoxy-alpha-L-arabinose undecaprenyl phosphate from UDP-4-deoxy-4-formamido-beta-L-arabinose and undecaprenyl phosphate: step 1/2. Its pathway is bacterial outer membrane biogenesis; lipopolysaccharide biosynthesis. Functionally, catalyzes the transfer of 4-deoxy-4-formamido-L-arabinose from UDP to undecaprenyl phosphate. The modified arabinose is attached to lipid A and is required for resistance to polymyxin and cationic antimicrobial peptides. The protein is Undecaprenyl-phosphate 4-deoxy-4-formamido-L-arabinose transferase of Pseudomonas fluorescens (strain ATCC BAA-477 / NRRL B-23932 / Pf-5).